Reading from the N-terminus, the 119-residue chain is Large ribosomal subunit protein bL20c (119 aa).

This sequence belongs to the bacterial ribosomal protein bL20 family.

The protein localises to the plastid. It localises to the chloroplast. In terms of biological role, binds directly to 23S ribosomal RNA and is necessary for the in vitro assembly process of the 50S ribosomal subunit. It is not involved in the protein synthesizing functions of that subunit. This Zea mays (Maize) protein is Large ribosomal subunit protein bL20c (rpl20).